The primary structure comprises 154 residues: Protein X (154 aa).

A mitochondrial targeting sequence region spans residues 68–117 (PCALRFTSARSMETTVNAHQVLPKVLHKRTLGLSAMSTTDLEAYFKDCLF).

It belongs to the orthohepadnavirus protein X family. May form homodimer. May interact with host CEBPA, CFLAR, CREB1, DDB1, E4F1, HBXIP, HSPD1/HSP60, NFKBIA, POLR2E and SMAD4. Interacts with host SMC5-SMC6 complex and induces its degradation. Interacts with host TRPC4AP; leading to prevent ubiquitination of TRPC4AP. Interacts with host PLSCR1; this interaction promotes ubiquitination and degradation of HBx and impairs HBx-mediated cell proliferation. A fraction may be phosphorylated in insect cells and HepG2 cells, a human hepatoblastoma cell line. Phosphorylated in vitro by host protein kinase C or mitogen-activated protein kinase. N-acetylated in insect cells.

The protein localises to the host cytoplasm. The protein resides in the host nucleus. Its subcellular location is the host mitochondrion. In terms of biological role, multifunctional protein that plays a role in silencing host antiviral defenses and promoting viral transcription. Does not seem to be essential for HBV infection. May be directly involved in development of cirrhosis and liver cancer (hepatocellular carcinoma). Most of cytosolic activities involve modulation of cytosolic calcium. The effect on apoptosis is controversial depending on the cell types in which the studies have been conducted. May induce apoptosis by localizing in mitochondria and causing loss of mitochondrial membrane potential. May also modulate apoptosis by binding host CFLAR, a key regulator of the death-inducing signaling complex (DISC). Promotes viral transcription by using the host E3 ubiquitin ligase DDB1 to target the SMC5-SMC6 complex to proteasomal degradation. This host complex would otherwise bind to viral episomal DNA, and prevents its transcription. Moderately stimulates transcription of many different viral and cellular transcription elements. Promoters and enhancers stimulated by HBx contain DNA binding sites for NF-kappa-B, AP-1, AP-2, c-EBP, ATF/CREB, or the calcium-activated factor NF-AT. This Homo sapiens (Human) protein is Protein X.